Here is a 435-residue protein sequence, read N- to C-terminus: Cell adhesion molecule 2 (435 aa).

The first 24 residues, 1 to 24 (MIWKRSAVLRFYSVCGLLLLGSQG), serve as a signal peptide directing secretion. Residues 25 to 367 (QFPLTQNVTV…SLAGQNGPDH (343 aa)) lie on the Extracellular side of the membrane. The 93-residue stretch at 27–119 (PLTQNVTVVE…PVKTSKAYLT (93 aa)) folds into the Ig-like V-type domain. N-linked (GlcNAc...) asparagine glycosylation is found at asparagine 31 and asparagine 51. 3 disulfides stabilise this stretch: cysteine 44–cysteine 104, cysteine 146–cysteine 203, and cysteine 248–cysteine 296. 2 Ig-like C2-type domains span residues 127 to 219 (PQIS…VAMQ) and 227 to 312 (PSVK…YVLI). Asparagine 291 carries N-linked (GlcNAc...) asparagine glycosylation. Residues 341 to 351 (TTSPSTSASSS) show a composition bias toward low complexity. A disordered region spans residues 341–360 (TTSPSTSASSSSRRDPNSLA). The chain crosses the membrane as a helical span at residues 368–388 (ALIGGIVAVVVFVTLCSIFLL). Topologically, residues 389–435 (GRYLARHKGTYLTNEAKGAEDAPDADTAIINAEGSQVNAEEKKEYFI) are cytoplasmic. Serine 423 carries the post-translational modification Phosphoserine.

This sequence belongs to the nectin family. In terms of processing, glycosylation at Asn-51 reduces adhesive binding.

It is found in the cell membrane. It localises to the synapse. The protein resides in the cell projection. The protein localises to the axon. Its function is as follows. Adhesion molecule that engages in homo- and heterophilic interactions with the other nectin-like family members, leading to cell aggregation. Important for synapse organization, providing regulated trans-synaptic adhesion. Preferentially binds to oligodendrocytes. The sequence is that of Cell adhesion molecule 2 (Cadm2) from Rattus norvegicus (Rat).